The following is a 257-amino-acid chain: Zinc import ATP-binding protein ZnuC (257 aa).

The ABC transporter domain occupies 6–221 (VRLEQITVAF…AFVETFGHQV (216 aa)). 38 to 45 (GPNGAGKT) provides a ligand contact to ATP.

It belongs to the ABC transporter superfamily. Zinc importer (TC 3.A.1.15.5) family. As to quaternary structure, the complex is composed of two ATP-binding proteins (ZnuC), two transmembrane proteins (ZnuB) and a solute-binding protein (ZnuA).

It is found in the cell inner membrane. The enzyme catalyses Zn(2+)(out) + ATP(in) + H2O(in) = Zn(2+)(in) + ADP(in) + phosphate(in) + H(+)(in). In terms of biological role, part of the ABC transporter complex ZnuABC involved in zinc import. Responsible for energy coupling to the transport system. This chain is Zinc import ATP-binding protein ZnuC, found in Marinobacter nauticus (strain ATCC 700491 / DSM 11845 / VT8) (Marinobacter aquaeolei).